The chain runs to 255 residues: NAD kinase (255 aa).

Aspartate 44 functions as the Proton acceptor in the catalytic mechanism. NAD(+) is bound by residues aspartate 44–glycine 45, histidine 49, asparagine 114–glutamate 115, aspartate 144, alanine 152, serine 155–serine 160, and glutamine 216.

It belongs to the NAD kinase family. Requires a divalent metal cation as cofactor.

The protein localises to the cytoplasm. The catalysed reaction is NAD(+) + ATP = ADP + NADP(+) + H(+). Its function is as follows. Involved in the regulation of the intracellular balance of NAD and NADP, and is a key enzyme in the biosynthesis of NADP. Catalyzes specifically the phosphorylation on 2'-hydroxyl of the adenosine moiety of NAD to yield NADP. This chain is NAD kinase, found in Rickettsia africae (strain ESF-5).